The following is a 168-amino-acid chain: DAZ-associated protein 2 (168 aa).

A compositionally biased stretch (low complexity) spans 1–13 (MNSKGQYPTQPTY). Residues 1-25 (MNSKGQYPTQPTYPVQPPGNPVYPQ) are disordered. Positions 39 to 42 (PPAY) match the PPAY motif. Ser-77 carries the phosphoserine modification.

In terms of assembly, interacts with SOX6. Interacts with DAZ1 and DAZL. Interacts with IL17RB. May interact with FAM168B. Interacts with INCA1. Interacts with EIF4G1 and EIF4G2. Interacts (via PPAY motif) with NEDD4 (via WW domains). Interacts with transcription factor TCF4; the interaction results in localization of DAZAP2 to the nucleus. Interacts with transcription factors TCF7 and TCF7L1. Interacts with transcription factor LEF1. Interacts with serine/threonine-protein kinase HIPK2; the interaction results in phosphorylation of DAZAP2 which causes localization of DAZAP2 to the nucleus, reduces interaction of DAZAP2 with HIPK2 and prevents DAZAP2-dependent degradation of HIPK2. Interacts with ubiquitin ligase SIAH1; the interaction is decreased following phosphorylation of DAZAP2 by HIPK2. Interacts with TP53; the interaction is triggered by DNA damage. Post-translationally, ubiquitinated by SMURF2, leading to proteasomal degradation. Ubiquitinated by NEDD4, leading to proteasomal degradation. In terms of processing, following DNA damage, phosphorylated by HIPK2 which promotes DAZAP2 localization to the nucleus, reduces interaction of DAZAP2 with HIPK2 and SIAH1, and prevents DAZAP2-dependent ubiquitination of HIPK2 by E3 ubiquitin-protein ligase SIAH1 and subsequent HIPK2 proteasomal degradation. As to expression, widely expressed. Highly expressed in brain.

Its subcellular location is the cytoplasm. It is found in the nucleus. The protein resides in the nucleus speckle. The protein localises to the nuclear body. It localises to the stress granule. Its function is as follows. In unstressed cells, promotes SIAH1-mediated polyubiquitination and degradation of the serine/threonine-protein kinase HIPK2, probably by acting as a loading factor that potentiates complex formation between HIPK2 and ubiquitin ligase SIAH1. In response to DNA damage, localizes to the nucleus following phosphorylation by HIPK2 and modulates the expression of a subset of TP53/p53 target genes by binding to TP53 at target gene promoters. This limits the expression of a number of cell death-mediating TP53 target genes, reducing DNA damage-induced cell death. Enhances the binding of transcription factor TCF7L2/TCF4, a Wnt signaling pathway effector, to the promoters of target genes. Plays a role in stress granule formation. This Mus musculus (Mouse) protein is DAZ-associated protein 2 (Dazap2).